The chain runs to 612 residues: tRNA uridine 5-carboxymethylaminomethyl modification enzyme MnmG (612 aa).

An FAD-binding site is contributed by 9–14; it reads GAGHAG. 270–284 contacts NAD(+); the sequence is GPLYCPSIEDKVFKF.

It belongs to the MnmG family. Homodimer. Heterotetramer of two MnmE and two MnmG subunits. FAD serves as cofactor.

The protein resides in the cytoplasm. NAD-binding protein involved in the addition of a carboxymethylaminomethyl (cmnm) group at the wobble position (U34) of certain tRNAs, forming tRNA-cmnm(5)s(2)U34. In Mycoplasma genitalium (strain ATCC 33530 / DSM 19775 / NCTC 10195 / G37) (Mycoplasmoides genitalium), this protein is tRNA uridine 5-carboxymethylaminomethyl modification enzyme MnmG.